Consider the following 139-residue polypeptide: D-ribose pyranase (139 aa).

Catalysis depends on histidine 20, which acts as the Proton donor. Residues aspartate 28, histidine 106, and 128 to 130 (YAN) each bind substrate.

It belongs to the RbsD / FucU family. RbsD subfamily. Homodecamer.

Its subcellular location is the cytoplasm. It carries out the reaction beta-D-ribopyranose = beta-D-ribofuranose. Its pathway is carbohydrate metabolism; D-ribose degradation; D-ribose 5-phosphate from beta-D-ribopyranose: step 1/2. Its function is as follows. Catalyzes the interconversion of beta-pyran and beta-furan forms of D-ribose. The polypeptide is D-ribose pyranase (Salmonella agona (strain SL483)).